The chain runs to 31 residues: Cytochrome b6-f complex subunit 6 (31 aa).

Residues 4–24 (ITSYFGFLLAALTITPALFIG) form a helical membrane-spanning segment.

This sequence belongs to the PetL family. In terms of assembly, the 4 large subunits of the cytochrome b6-f complex are cytochrome b6, subunit IV (17 kDa polypeptide, PetD), cytochrome f and the Rieske protein, while the 4 small subunits are PetG, PetL, PetM and PetN. The complex functions as a dimer.

The protein resides in the plastid. It is found in the chloroplast thylakoid membrane. Component of the cytochrome b6-f complex, which mediates electron transfer between photosystem II (PSII) and photosystem I (PSI), cyclic electron flow around PSI, and state transitions. PetL is important for photoautotrophic growth as well as for electron transfer efficiency and stability of the cytochrome b6-f complex. The chain is Cytochrome b6-f complex subunit 6 from Saccharum barberi (Indian sugarcane).